Consider the following 718-residue polypeptide: Polyribonucleotide nucleotidyltransferase (718 aa).

Mg(2+) is bound by residues aspartate 496 and aspartate 502. Positions 563–622 (PRLLTIKIDPDMIGLVIGPGGKTIKGITEETGAKIDIEDDGTVTISAVDENKAKRARNIV) constitute a KH domain. In terms of domain architecture, S1 motif spans 632 to 700 (GDVYAGRVTR…NKGRINLTRL (69 aa)).

As to quaternary structure, may form homodimers or higher order multimers. Interacts with RNase E (rne). Requires Mg(2+) as cofactor.

It is found in the cytoplasm. It catalyses the reaction RNA(n+1) + phosphate = RNA(n) + a ribonucleoside 5'-diphosphate. Functionally, involved in mRNA degradation. Catalyzes the phosphorolysis of single-stranded polyribonucleotides processively in the 3'- to 5'-direction. The protein is Polyribonucleotide nucleotidyltransferase of Nostoc sp. (strain PCC 7120 / SAG 25.82 / UTEX 2576).